Consider the following 335-residue polypeptide: UPF0353 protein MLBr01808 (335 aa).

2 helical membrane-spanning segments follow: residues 18–38 and 67–87; these read WFFL…MMQV and VPAI…AGPT. In terms of domain architecture, VWFA spans 98 to 294; it reads VVMLVIDVSQ…AELKAVYASL (197 aa). A helical membrane pass occupies residues 309 to 329; it reads AGWLRLGVLVLALAALTALLI.

Belongs to the UPF0353 family.

The protein resides in the cell membrane. The chain is UPF0353 protein MLBr01808 from Mycobacterium leprae (strain Br4923).